The primary structure comprises 284 residues: Para-Rep C3 (284 aa).

In terms of domain architecture, CRESS-DNA virus Rep endonuclease spans 3–98; sequence TVQSTCWVFT…IEGPWEYGKY (96 aa). The RCR-1 motif lies at 10-13; that stretch reads VFTL. A divalent metal cation is bound by residues Glu36 and His42. The short motif at 42–44 is the RCR-2 element; sequence HLQ. The Nuclear localization signal motif lies at 51–71; it reads AQQSLGQMKAIIPGAHFEKMR. Tyr81 acts as the For DNA cleavage activity in catalysis. An RCR-3 motif is present at residues 81–84; the sequence is YAMK. Position 86 (Asp86) interacts with a divalent metal cation. Residues 98-104 carry the Nuclear localization signal motif; it reads YIKKGSH. An ATP-binding site is contributed by 174-182; sequence GPKGGEGKS.

It belongs to the nanoviridea/circoviridae replication-associated protein family. As to quaternary structure, homooligomer (Potential). Rep binds to repeated DNA motifs (iterons). Mg(2+) serves as cofactor. It depends on Mn(2+) as a cofactor.

It is found in the host nucleus. The catalysed reaction is ATP + H2O = ADP + phosphate + H(+). Functionally, initiates and terminates the replication only of its own subviral DNA molecule. The closed circular ssDNA genome is first converted to a superhelical dsDNA. Rep binds a specific hairpin at the genome origin of replication. Introduces an endonucleolytic nick within the intergenic region of the genome, thereby initiating the rolling circle replication (RCR). Following cleavage, binds covalently to the 5'-phosphate of DNA as a tyrosyl ester. The cleavage gives rise to a free 3'-OH that serves as a primer for the cellular DNA polymerase. The polymerase synthesizes the (+) strand DNA by rolling circle mechanism. After one round of replication, a Rep-catalyzed nucleotidyl transfer reaction releases a circular single-stranded virus genome, thereby terminating the replication. Displays origin-specific DNA cleavage, nucleotidyl transferase, ATPase and helicase activities. In Milk vetch dwarf C3 alphasatellite (MVDC3A), this protein is Para-Rep C3 (C3).